The sequence spans 91 residues: Cell division topological specificity factor (91 aa).

This sequence belongs to the MinE family.

Its function is as follows. Prevents the cell division inhibition by proteins MinC and MinD at internal division sites while permitting inhibition at polar sites. This ensures cell division at the proper site by restricting the formation of a division septum at the midpoint of the long axis of the cell. This is Cell division topological specificity factor from Caldanaerobacter subterraneus subsp. tengcongensis (strain DSM 15242 / JCM 11007 / NBRC 100824 / MB4) (Thermoanaerobacter tengcongensis).